The sequence spans 339 residues: Protein FAM131B (339 aa).

Residues 1 to 22 (MDSTSSLHGSSLHRPSTEQTRT) are disordered. A phosphoserine mark is found at S47, S114, and S117. A disordered region spans residues 222 to 339 (GPAFGDSQPS…PLLTQPSTPA (118 aa)). Polar residues-rich tracts occupy residues 239-250 (QPASGYSAQEPS) and 324-339 (PTTS…STPA). T325 is subject to Phosphothreonine. A Phosphoserine modification is found at S327.

Belongs to the FAM131 family.

The protein is Protein FAM131B (FAM131B) of Bos taurus (Bovine).